A 636-amino-acid polypeptide reads, in one-letter code: Translation factor GUF1, mitochondrial (636 aa).

A tr-type G domain is found at 35–218; the sequence is SNYRNFSIVA…AIIRDIPGPR (184 aa). Residues 44–51, 111–115, and 165–168 each bind GTP; these read AHVDHGKS, DTPGH, and NKID.

This sequence belongs to the TRAFAC class translation factor GTPase superfamily. Classic translation factor GTPase family. LepA subfamily.

The protein localises to the mitochondrion inner membrane. It carries out the reaction GTP + H2O = GDP + phosphate + H(+). In terms of biological role, promotes mitochondrial protein synthesis. May act as a fidelity factor of the translation reaction, by catalyzing a one-codon backward translocation of tRNAs on improperly translocated ribosomes. Binds to mitochondrial ribosomes in a GTP-dependent manner. The protein is Translation factor GUF1, mitochondrial of Debaryomyces hansenii (strain ATCC 36239 / CBS 767 / BCRC 21394 / JCM 1990 / NBRC 0083 / IGC 2968) (Yeast).